The sequence spans 167 residues: Translationally-controlled tumor protein homolog (167 aa).

Residues 1-167 form the TCTP domain; the sequence is MIIYKDIFSN…WKHGIVEEKI (167 aa). Phosphoserine is present on residues S9 and S15.

Belongs to the TCTP family. In terms of assembly, interacts with the 40S and 60S ribosomal subunits. Interacts with microtubules.

It is found in the cytoplasm. The protein localises to the cytoskeleton. Its subcellular location is the mitochondrion. Involved in protein synthesis. Involved in microtubule stabilization. The polypeptide is Translationally-controlled tumor protein homolog (TMA19) (Saccharomyces cerevisiae (strain ATCC 204508 / S288c) (Baker's yeast)).